The following is a 156-amino-acid chain: ATP synthase subunit b (156 aa).

A helical transmembrane segment spans residues alanine 11–alanine 31.

The protein belongs to the ATPase B chain family. In terms of assembly, F-type ATPases have 2 components, F(1) - the catalytic core - and F(0) - the membrane proton channel. F(1) has five subunits: alpha(3), beta(3), gamma(1), delta(1), epsilon(1). F(0) has three main subunits: a(1), b(2) and c(10-14). The alpha and beta chains form an alternating ring which encloses part of the gamma chain. F(1) is attached to F(0) by a central stalk formed by the gamma and epsilon chains, while a peripheral stalk is formed by the delta and b chains.

The protein localises to the cell inner membrane. F(1)F(0) ATP synthase produces ATP from ADP in the presence of a proton or sodium gradient. F-type ATPases consist of two structural domains, F(1) containing the extramembraneous catalytic core and F(0) containing the membrane proton channel, linked together by a central stalk and a peripheral stalk. During catalysis, ATP synthesis in the catalytic domain of F(1) is coupled via a rotary mechanism of the central stalk subunits to proton translocation. Functionally, component of the F(0) channel, it forms part of the peripheral stalk, linking F(1) to F(0). The protein is ATP synthase subunit b of Aeromonas hydrophila subsp. hydrophila (strain ATCC 7966 / DSM 30187 / BCRC 13018 / CCUG 14551 / JCM 1027 / KCTC 2358 / NCIMB 9240 / NCTC 8049).